The sequence spans 351 residues: Nicotinate-nucleotide--dimethylbenzimidazole phosphoribosyltransferase (351 aa).

Glutamate 317 (proton acceptor) is an active-site residue.

The protein belongs to the CobT family.

The enzyme catalyses 5,6-dimethylbenzimidazole + nicotinate beta-D-ribonucleotide = alpha-ribazole 5'-phosphate + nicotinate + H(+). It functions in the pathway nucleoside biosynthesis; alpha-ribazole biosynthesis; alpha-ribazole from 5,6-dimethylbenzimidazole: step 1/2. Its function is as follows. Catalyzes the synthesis of alpha-ribazole-5'-phosphate from nicotinate mononucleotide (NAMN) and 5,6-dimethylbenzimidazole (DMB). This Pseudomonas putida (strain ATCC 700007 / DSM 6899 / JCM 31910 / BCRC 17059 / LMG 24140 / F1) protein is Nicotinate-nucleotide--dimethylbenzimidazole phosphoribosyltransferase.